A 335-amino-acid polypeptide reads, in one-letter code: HTH-type transcriptional regulator MalR (335 aa).

Residues 1 to 55 enclose the HTH lacI-type domain; it reads MNIKDIARLSGVGVSTVSRVINNHPDVKQSTREKVLQIIKDSNYIPNNSARILKQ. A DNA-binding region (H-T-H motif) is located at residues 3–22; that stretch reads IKDIARLSGVGVSTVSRVIN.

Its function is as follows. Repressor of glucanotransferase gene expression. The protein is HTH-type transcriptional regulator MalR of Clostridium butyricum.